Reading from the N-terminus, the 479-residue chain is Ribosomal RNA small subunit methyltransferase F (479 aa).

Residues 125–131 (AAAPGSK), E149, D176, and D194 each bind S-adenosyl-L-methionine. Catalysis depends on C247, which acts as the Nucleophile.

Belongs to the class I-like SAM-binding methyltransferase superfamily. RsmB/NOP family.

The protein localises to the cytoplasm. It carries out the reaction cytidine(1407) in 16S rRNA + S-adenosyl-L-methionine = 5-methylcytidine(1407) in 16S rRNA + S-adenosyl-L-homocysteine + H(+). Its function is as follows. Specifically methylates the cytosine at position 1407 (m5C1407) of 16S rRNA. This chain is Ribosomal RNA small subunit methyltransferase F, found in Escherichia coli O81 (strain ED1a).